A 225-amino-acid chain; its full sequence is NAD(P)H-quinone oxidoreductase subunit K, chloroplastic (225 aa).

The [4Fe-4S] cluster site is built by C43, C44, C108, and C139.

Belongs to the complex I 20 kDa subunit family. As to quaternary structure, NDH is composed of at least 16 different subunits, 5 of which are encoded in the nucleus. Requires [4Fe-4S] cluster as cofactor.

Its subcellular location is the plastid. It localises to the chloroplast thylakoid membrane. The enzyme catalyses a plastoquinone + NADH + (n+1) H(+)(in) = a plastoquinol + NAD(+) + n H(+)(out). It carries out the reaction a plastoquinone + NADPH + (n+1) H(+)(in) = a plastoquinol + NADP(+) + n H(+)(out). NDH shuttles electrons from NAD(P)H:plastoquinone, via FMN and iron-sulfur (Fe-S) centers, to quinones in the photosynthetic chain and possibly in a chloroplast respiratory chain. The immediate electron acceptor for the enzyme in this species is believed to be plastoquinone. Couples the redox reaction to proton translocation, and thus conserves the redox energy in a proton gradient. This is NAD(P)H-quinone oxidoreductase subunit K, chloroplastic from Draba nemorosa (Woodland whitlowgrass).